The following is a 455-amino-acid chain: Bifunctional protein GlmU (455 aa).

Residues 1–227 form a pyrophosphorylase region; sequence MGLSVIILAA…CEEVQGVNDR (227 aa). UDP-N-acetyl-alpha-D-glucosamine-binding positions include 8–11, lysine 22, glutamine 73, 78–79, 100–102, glycine 137, glutamate 152, asparagine 167, and asparagine 225; these read LAAG, GT, and YGD. Residue aspartate 102 coordinates Mg(2+). Asparagine 225 is a Mg(2+) binding site. Residues 228-248 form a linker region; the sequence is WELTKLERYYQRLMAKKLSLA. The segment at 249 to 455 is N-acetyltransferase; sequence GVTIIDPERF…KGWHRPTKKE (207 aa). Arginine 332 and lysine 350 together coordinate UDP-N-acetyl-alpha-D-glucosamine. The active-site Proton acceptor is the histidine 362. Residues tyrosine 365 and asparagine 376 each contribute to the UDP-N-acetyl-alpha-D-glucosamine site. Residues alanine 379, 385-386, serine 404, alanine 422, and arginine 439 each bind acetyl-CoA; that span reads NY.

It in the N-terminal section; belongs to the N-acetylglucosamine-1-phosphate uridyltransferase family. In the C-terminal section; belongs to the transferase hexapeptide repeat family. As to quaternary structure, homotrimer. Mg(2+) serves as cofactor.

It localises to the cytoplasm. It catalyses the reaction alpha-D-glucosamine 1-phosphate + acetyl-CoA = N-acetyl-alpha-D-glucosamine 1-phosphate + CoA + H(+). The catalysed reaction is N-acetyl-alpha-D-glucosamine 1-phosphate + UTP + H(+) = UDP-N-acetyl-alpha-D-glucosamine + diphosphate. It participates in nucleotide-sugar biosynthesis; UDP-N-acetyl-alpha-D-glucosamine biosynthesis; N-acetyl-alpha-D-glucosamine 1-phosphate from alpha-D-glucosamine 6-phosphate (route II): step 2/2. It functions in the pathway nucleotide-sugar biosynthesis; UDP-N-acetyl-alpha-D-glucosamine biosynthesis; UDP-N-acetyl-alpha-D-glucosamine from N-acetyl-alpha-D-glucosamine 1-phosphate: step 1/1. Its pathway is bacterial outer membrane biogenesis; LPS lipid A biosynthesis. Catalyzes the last two sequential reactions in the de novo biosynthetic pathway for UDP-N-acetylglucosamine (UDP-GlcNAc). The C-terminal domain catalyzes the transfer of acetyl group from acetyl coenzyme A to glucosamine-1-phosphate (GlcN-1-P) to produce N-acetylglucosamine-1-phosphate (GlcNAc-1-P), which is converted into UDP-GlcNAc by the transfer of uridine 5-monophosphate (from uridine 5-triphosphate), a reaction catalyzed by the N-terminal domain. This chain is Bifunctional protein GlmU, found in Coxiella burnetii (strain Dugway 5J108-111).